The primary structure comprises 755 residues: Atypical kinase coq-8, mitochondrial (755 aa).

Positions 57–78 (QDVDPLKEPNKTNAPLLSPTLP) are disordered. The segment covering 67-78 (KTNAPLLSPTLP) has biased composition (polar residues). ATP contacts are provided by residues 435 to 443 (FACASIGQV) and lysine 457. Residue aspartate 587 is the Proton acceptor of the active site.

Belongs to the protein kinase superfamily. ADCK protein kinase family.

It is found in the mitochondrion. The protein operates within cofactor biosynthesis; ubiquinone biosynthesis. Functionally, atypical kinase involved in the biosynthesis of coenzyme Q, also named ubiquinone, an essential lipid-soluble electron transporter for aerobic cellular respiration. Its substrate specificity is still unclear: may act as a protein kinase that mediates phosphorylation of coq-3. According to other reports, acts as a small molecule kinase, possibly a lipid kinase that phosphorylates a prenyl lipid in the ubiquinone biosynthesis pathway, as suggested by its ability to bind coenzyme Q lipid intermediates. The sequence is that of Atypical kinase coq-8, mitochondrial (coq-8) from Caenorhabditis elegans.